Here is a 54-residue protein sequence, read N- to C-terminus: MFRRLTFAQLLFATVLGIAGGVYIFQPVFEQYAKDQKELKEKMQLVQESEEKKS.

Residues 1–4 (MFRR) are Mitochondrial intermembrane-facing. Residues 5-25 (LTFAQLLFATVLGIAGGVYIF) traverse the membrane as a helical segment. At 26-54 (QPVFEQYAKDQKELKEKMQLVQESEEKKS) the chain is on the cytoplasmic side. The interval 30–36 (EQYAKDQ) is required for interaction with CLCC1.

As to quaternary structure, homooligomer. Interacts (via C-terminus) with endoplasmic reticulum (ER) protein CLCC1; the interaction occurs at the mitochondria-associated ER membrane, a zone of contact between the ER and mitochondrial membranes, but does not appear to play a role in ER-mitochondria tethering and is not affected by ER stress.

Its subcellular location is the mitochondrion outer membrane. Its function is as follows. Plays a role in regulation of the unfolded protein response triggered by endoplasmic reticulum (ER) stress resulting from the presence of unfolded proteins in the ER lumen. The chain is Protein PIGBOS1 from Homo sapiens (Human).